A 156-amino-acid chain; its full sequence is ATP synthase subunit b (156 aa).

The helical transmembrane segment at 11–31 (AIAFVLFVLFCMKYVWPPIMA) threads the bilayer.

This sequence belongs to the ATPase B chain family. In terms of assembly, F-type ATPases have 2 components, F(1) - the catalytic core - and F(0) - the membrane proton channel. F(1) has five subunits: alpha(3), beta(3), gamma(1), delta(1), epsilon(1). F(0) has three main subunits: a(1), b(2) and c(10-14). The alpha and beta chains form an alternating ring which encloses part of the gamma chain. F(1) is attached to F(0) by a central stalk formed by the gamma and epsilon chains, while a peripheral stalk is formed by the delta and b chains.

The protein resides in the cell inner membrane. Functionally, f(1)F(0) ATP synthase produces ATP from ADP in the presence of a proton or sodium gradient. F-type ATPases consist of two structural domains, F(1) containing the extramembraneous catalytic core and F(0) containing the membrane proton channel, linked together by a central stalk and a peripheral stalk. During catalysis, ATP synthesis in the catalytic domain of F(1) is coupled via a rotary mechanism of the central stalk subunits to proton translocation. Component of the F(0) channel, it forms part of the peripheral stalk, linking F(1) to F(0). The polypeptide is ATP synthase subunit b (Cronobacter sakazakii (strain ATCC BAA-894) (Enterobacter sakazakii)).